A 236-amino-acid chain; its full sequence is T-cell surface glycoprotein CD8 alpha chain (236 aa).

The signal sequence occupies residues 1 to 26 (MASRVICFLSLNLLLLDVITRLQVSG). Residues 27 to 130 (QLQLSPKKVD…ITSNSVMYFS (104 aa)) form the Ig-like V-type domain. The Extracellular portion of the chain corresponds to 27-189 (QLQLSPKKVD…MGLGFACDIY (163 aa)). An intrachain disulfide couples cysteine 47 to cysteine 119. The N-linked (GlcNAc...) asparagine glycan is linked to asparagine 63. O-linked (GalNAc...) threonine; partial glycosylation occurs at threonine 144. Threonine 148, threonine 152, threonine 158, and threonine 160 each carry an O-linked (GalNAc...) threonine glycan. The interval 150 to 170 (APTPVPPPTGTPRPLRPEACR) is disordered. The chain crosses the membrane as a helical span at residues 190–210 (IWAPLAGICAVLLLSLVITLI). A lipid anchor (S-palmitoyl cysteine) is attached at cysteine 211. The Cytoplasmic portion of the chain corresponds to 211 to 236 (CCHRNRRRVCKCPRPLVKPRPSEKFV).

As to quaternary structure, forms disulfide-linked heterodimers with CD8B at the cell surface. Also forms homodimers in several cell types including NK-cells or peripheral blood T-lymphocytes. Interacts with the MHC class I HLA-A/B2M dimer. Interacts with LCK in a zinc-dependent manner. Post-translationally, palmitoylated, but association with CD8B seems to be more important for the enrichment of CD8A in lipid rafts. In terms of processing, O-glycosylated. Phosphorylated in cytotoxic T-lymphocytes (CTLs) following activation.

The protein localises to the cell membrane. Its function is as follows. Integral membrane glycoprotein that plays an essential role in the immune response and serves multiple functions in responses against both external and internal offenses. In T-cells, functions primarily as a coreceptor for MHC class I molecule:peptide complex. The antigens presented by class I peptides are derived from cytosolic proteins while class II derived from extracellular proteins. Interacts simultaneously with the T-cell receptor (TCR) and the MHC class I proteins presented by antigen presenting cells (APCs). In turn, recruits the Src kinase LCK to the vicinity of the TCR-CD3 complex. LCK then initiates different intracellular signaling pathways by phosphorylating various substrates ultimately leading to lymphokine production, motility, adhesion and activation of cytotoxic T-lymphocytes (CTLs). This mechanism enables CTLs to recognize and eliminate infected cells and tumor cells. In NK-cells, the presence of CD8A homodimers at the cell surface provides a survival mechanism allowing conjugation and lysis of multiple target cells. CD8A homodimer molecules also promote the survival and differentiation of activated lymphocytes into memory CD8 T-cells. The protein is T-cell surface glycoprotein CD8 alpha chain (Cd8a) of Rattus norvegicus (Rat).